Here is a 318-residue protein sequence, read N- to C-terminus: Polyprenal reductase (318 aa).

Topologically, residues 1 to 11 (MAPWAEAEHSA) are cytoplasmic. A helical transmembrane segment spans residues 12–34 (LNPLRAVWLTLTAAFLLTLLLQL). Residues 35-80 (LPPGLLPGCAIFQDLIRYGKTKCGEPSRPAACRAFDVPKRYFSHFY) are Lumenal-facing. Residues 81–101 (IISVLWNGFLLWCLTQSLFLG) form a helical membrane-spanning segment. Residues 102–117 (APFPSWLHGLLRILGA) are Cytoplasmic-facing. A helical membrane pass occupies residues 118 to 138 (AQFQGGELALSAFLVLVFLWL). The Lumenal segment spans residues 139–157 (HSLRRLFECLYVSVFSNVM). Residues 158 to 178 (IHVVQYCFGLVYYVLVGLTVL) form a helical membrane-spanning segment. Residues 179 to 194 (SQVPMDGRNAYITGKN) lie on the Cytoplasmic side of the membrane. A helical transmembrane segment spans residues 195-215 (LLMQARWFHILGMMMFIWSSA). At 216–260 (HQYKCHVILGNLRKNKAGVVIHCNHRIPFGDWFEYVSSPNYLAEL) the chain is on the lumenal side. Residues 261–281 (MIYVSMAVTFGFHNLTWWLVV) form a helical membrane-spanning segment. Residues 282–318 (TNVFFNQALSAFLSHQFYKSKFVSYPKHRKAFLPFLF) are Cytoplasmic-facing.

This sequence belongs to the steroid 5-alpha reductase family. Polyprenal reductase subfamily. In terms of tissue distribution, expressed in preadipocytes (at protein level). Overexpressed in hormone-refractory prostate cancers (HRPC). Almost no or little expression in normal adult organs.

It localises to the endoplasmic reticulum membrane. The catalysed reaction is a di-trans,poly-cis-dolichal + NADP(+) = a di-trans,poly-cis-polyprenal + NADPH + H(+). It catalyses the reaction a 3-oxo-5alpha-steroid + NADP(+) = a 3-oxo-Delta(4)-steroid + NADPH + H(+). It carries out the reaction androst-4-ene-3,17-dione + NADPH + H(+) = 5alpha-androstan-3,17-dione + NADP(+). The enzyme catalyses 17beta-hydroxy-5alpha-androstan-3-one + NADP(+) = testosterone + NADPH + H(+). The protein operates within protein modification; protein glycosylation. Functionally, plays a key role in early steps of protein N-linked glycosylation by being involved in the conversion of polyprenol into dolichol. Acts as a polyprenal reductase that mediates the reduction of polyprenal into dolichal in a NADP-dependent mechanism. Dolichols are required for the synthesis of dolichol-linked monosaccharides and the oligosaccharide precursor used for N-glycosylation. Also able to convert testosterone (T) into 5-alpha-dihydrotestosterone (DHT). The protein is Polyprenal reductase of Homo sapiens (Human).